We begin with the raw amino-acid sequence, 679 residues long: NADPH--cytochrome P450 reductase (679 aa).

Residues 1–21 (MADSHGDTGATMPEAAAQEAS) are Lumenal-facing. A helical transmembrane segment spans residues 22 to 42 (VFSMTDVVLFSLIVGLITYWF). At 43–679 (LFRKKKEEVP…KGRYSLDVWS (637 aa)) the chain is on the cytoplasmic side. Ser-64 is modified (phosphoserine). Residues 81 to 225 (IVVFYGSQTG…DFITWREQFW (145 aa)) form the Flavodoxin-like domain. Residues 87 to 92 (SQTGTA), 139 to 142 (ATYG), 174 to 183 (LGNKTYEHFN), and Asp-209 each bind FMN. The region spanning 280-522 (KNPFLATVTT…FVRKSQFRLP (243 aa)) is the FAD-binding FR-type domain. Arg-299 provides a ligand contact to NADP(+). Residues Arg-425, 455–458 (RYYS), 473–475 (CAV), Tyr-479, and 489–492 (GVAT) each bind FAD. Residues Thr-536, 597–598 (SR), 603–607 (KVYVQ), and Asp-640 contribute to the NADP(+) site. Residue Trp-678 participates in FAD binding.

This sequence belongs to the NADPH--cytochrome P450 reductase family. In the N-terminal section; belongs to the flavodoxin family. It in the C-terminal section; belongs to the flavoprotein pyridine nucleotide cytochrome reductase family. Requires FAD as cofactor. The cofactor is FMN.

The protein resides in the endoplasmic reticulum membrane. The enzyme catalyses 2 oxidized [cytochrome P450] + NADPH = 2 reduced [cytochrome P450] + NADP(+) + H(+). Functionally, this enzyme is required for electron transfer from NADP to cytochrome P450 in microsomes. It can also provide electron transfer to heme oxygenase and cytochrome B5. The polypeptide is NADPH--cytochrome P450 reductase (Oryctolagus cuniculus (Rabbit)).